The sequence spans 204 residues: Methylthioribulose-1-phosphate dehydratase (204 aa).

Zn(2+) is bound by residues His94 and His96.

This sequence belongs to the aldolase class II family. MtnB subfamily. Zn(2+) is required as a cofactor.

It carries out the reaction 5-(methylsulfanyl)-D-ribulose 1-phosphate = 5-methylsulfanyl-2,3-dioxopentyl phosphate + H2O. Its pathway is amino-acid biosynthesis; L-methionine biosynthesis via salvage pathway; L-methionine from S-methyl-5-thio-alpha-D-ribose 1-phosphate: step 2/6. In terms of biological role, catalyzes the dehydration of methylthioribulose-1-phosphate (MTRu-1-P) into 2,3-diketo-5-methylthiopentyl-1-phosphate (DK-MTP-1-P). The polypeptide is Methylthioribulose-1-phosphate dehydratase (Serratia proteamaculans (strain 568)).